The primary structure comprises 353 residues: Quinolinate synthase (353 aa).

Positions 47 and 68 each coordinate iminosuccinate. Residue Cys-113 participates in [4Fe-4S] cluster binding. Iminosuccinate-binding positions include 139 to 141 (YAN) and Ser-156. Cys-200 lines the [4Fe-4S] cluster pocket. Residues 226–228 (HPE) and Thr-243 each bind iminosuccinate. Cys-297 provides a ligand contact to [4Fe-4S] cluster.

It belongs to the quinolinate synthase family. Type 1 subfamily. [4Fe-4S] cluster serves as cofactor.

Its subcellular location is the cytoplasm. It carries out the reaction iminosuccinate + dihydroxyacetone phosphate = quinolinate + phosphate + 2 H2O + H(+). The protein operates within cofactor biosynthesis; NAD(+) biosynthesis; quinolinate from iminoaspartate: step 1/1. Functionally, catalyzes the condensation of iminoaspartate with dihydroxyacetone phosphate to form quinolinate. The protein is Quinolinate synthase of Vibrio campbellii (strain ATCC BAA-1116).